Here is a 213-residue protein sequence, read N- to C-terminus: Small ribosomal subunit protein uS3 (213 aa).

Residues isoleucine 38–arginine 106 enclose the KH type-2 domain.

The protein belongs to the universal ribosomal protein uS3 family. As to quaternary structure, part of the 30S ribosomal subunit. Forms a tight complex with proteins S10 and S14.

Binds the lower part of the 30S subunit head. Binds mRNA in the 70S ribosome, positioning it for translation. The sequence is that of Small ribosomal subunit protein uS3 from Oleidesulfovibrio alaskensis (strain ATCC BAA-1058 / DSM 17464 / G20) (Desulfovibrio alaskensis).